The primary structure comprises 97 residues: HssA/B-like protein 38 (97 aa).

The disordered stretch occupies residues Met1–Ser29.

It belongs to the hssA/B family.

This is HssA/B-like protein 38 (hssl38) from Dictyostelium discoideum (Social amoeba).